The primary structure comprises 1441 residues: ABC transporter G family member 41 (1441 aa).

The segment covering 1–14 has biased composition (basic and acidic residues); sequence MEDKKQQQQQQREE. Positions 1-28 are disordered; sequence MEDKKQQQQQQREEAEAEEEAPVVPSSL. The region spanning 159 to 432 is the ABC transporter 1 domain; sequence ATARGLSRRP…FESCGFKCPE (274 aa). 192–199 is an ATP binding site; sequence GPPGCGKT. Residues 510 to 722 enclose the ABC transmembrane type-2 1 domain; sequence DLLKACFARE…AEIGLTGNEF (213 aa). 6 consecutive transmembrane segments (helical) span residues 528–548, 566–586, 600–620, 642–662, 672–692, and 758–778; these read FIYITKVVQLGLLAVITGTVF, SLFYALILLLVNGFPELAIAV, FYPAWAYAIPSFILKIPLSLV, FFCQLLILFLVHTGALSLFRC, ASSVGGTMSFLVILLFGGFII, and ASALIGFILLLNVGYAIGLTI. One can recognise an ABC transporter 2 domain in the interval 838-1090; that stretch reads ISFQDVNYYV…NVIHYFETIP (253 aa). ATP is bound at residue 883-890; sequence GVTGAGKT. An ABC transmembrane type-2 2 domain is found at 1163–1379; the sequence is EQLKACIWKQ…TLNVFFTTQF (217 aa). 7 consecutive transmembrane segments (helical) span residues 1187–1207, 1215–1235, 1272–1292, 1300–1320, 1329–1349, 1357–1377, and 1413–1433; these read ILFITISCIVFGVLFWQQGDI, GLFTILGCMYGTTLFTGINNC, IPYVLVQILLIMFIAYPMIGY, FWFMYTIACTLLYFLYFGMMI, VASILASMFYTLQNLMSGFIV, WWIWLYYTSPLSWTLNVFFTT, and LAAIILAMFPILFAILFGLSI.

Belongs to the ABC transporter superfamily. ABCG family. PDR (TC 3.A.1.205) subfamily.

Its subcellular location is the membrane. May be a general defense protein. This is ABC transporter G family member 41 from Oryza sativa subsp. japonica (Rice).